Consider the following 237-residue polypeptide: Phosphoribosylaminoimidazole-succinocarboxamide synthase (237 aa).

Belongs to the SAICAR synthetase family.

The enzyme catalyses 5-amino-1-(5-phospho-D-ribosyl)imidazole-4-carboxylate + L-aspartate + ATP = (2S)-2-[5-amino-1-(5-phospho-beta-D-ribosyl)imidazole-4-carboxamido]succinate + ADP + phosphate + 2 H(+). It participates in purine metabolism; IMP biosynthesis via de novo pathway; 5-amino-1-(5-phospho-D-ribosyl)imidazole-4-carboxamide from 5-amino-1-(5-phospho-D-ribosyl)imidazole-4-carboxylate: step 1/2. The sequence is that of Phosphoribosylaminoimidazole-succinocarboxamide synthase from Shigella sonnei (strain Ss046).